The chain runs to 423 residues: Mannitol-1-phosphate 5-dehydrogenase (423 aa).

Residues C40, H69, and E70 each contribute to the Zn(2+) site.

This sequence belongs to the zinc-containing alcohol dehydrogenase family. Requires Zn(2+) as cofactor.

The enzyme catalyses D-mannitol 1-phosphate + NAD(+) = beta-D-fructose 6-phosphate + NADH + H(+). Functionally, seems to be involved in mannitol utilization. Complements an E.coli mtlD deletion mutant. The chain is Mannitol-1-phosphate 5-dehydrogenase from Aliivibrio fischeri (strain ATCC 700601 / ES114) (Vibrio fischeri).